Reading from the N-terminus, the 442-residue chain is Phosphoglucosamine mutase (442 aa).

Ser103 serves as the catalytic Phosphoserine intermediate. Residues Ser103, Asp241, Asp243, and Asp245 each coordinate Mg(2+). The residue at position 103 (Ser103) is a Phosphoserine.

Belongs to the phosphohexose mutase family. The cofactor is Mg(2+). Activated by phosphorylation.

The catalysed reaction is alpha-D-glucosamine 1-phosphate = D-glucosamine 6-phosphate. Functionally, catalyzes the conversion of glucosamine-6-phosphate to glucosamine-1-phosphate. In Deinococcus deserti (strain DSM 17065 / CIP 109153 / LMG 22923 / VCD115), this protein is Phosphoglucosamine mutase.